A 418-amino-acid polypeptide reads, in one-letter code: Glutamyl-tRNA reductase (418 aa).

Substrate is bound by residues 49–52, Ser108, 113–115, and Gln119; these read TCNR and EPQ. Cys50 (nucleophile) is an active-site residue. 188–193 serves as a coordination point for NADP(+); the sequence is GAGETI.

This sequence belongs to the glutamyl-tRNA reductase family. In terms of assembly, homodimer.

The catalysed reaction is (S)-4-amino-5-oxopentanoate + tRNA(Glu) + NADP(+) = L-glutamyl-tRNA(Glu) + NADPH + H(+). It functions in the pathway porphyrin-containing compound metabolism; protoporphyrin-IX biosynthesis; 5-aminolevulinate from L-glutamyl-tRNA(Glu): step 1/2. In terms of biological role, catalyzes the NADPH-dependent reduction of glutamyl-tRNA(Glu) to glutamate 1-semialdehyde (GSA). The sequence is that of Glutamyl-tRNA reductase from Aliivibrio fischeri (strain MJ11) (Vibrio fischeri).